The chain runs to 307 residues: Serine/threonine-protein phosphatase 4 catalytic subunit (307 aa).

Mn(2+) is bound by residues aspartate 54, histidine 56, aspartate 82, and asparagine 114. The Proton donor role is filled by histidine 115. Residues histidine 164 and histidine 238 each coordinate Mn(2+). Leucine 307 is modified (leucine methyl ester).

It belongs to the PPP phosphatase family. PP-4 (PP-X) subfamily. Serine/threonine-protein phosphatase 4 (PP4) occurs in different assemblies of the catalytic and one or more regulatory subunits. It depends on Mn(2+) as a cofactor.

It localises to the cytoplasm. Its subcellular location is the nucleus. The protein resides in the cytoskeleton. The protein localises to the microtubule organizing center. It is found in the centrosome. The enzyme catalyses O-phospho-L-seryl-[protein] + H2O = L-seryl-[protein] + phosphate. It catalyses the reaction O-phospho-L-threonyl-[protein] + H2O = L-threonyl-[protein] + phosphate. Functionally, protein phosphatase that regulates many processes such as microtubule organization at centrosomes. The polypeptide is Serine/threonine-protein phosphatase 4 catalytic subunit (ppp4c) (Xenopus laevis (African clawed frog)).